We begin with the raw amino-acid sequence, 398 residues long: Maltoporin (398 aa).

The N-terminal stretch at methionine 1–alanine 30 is a signal peptide.

This sequence belongs to the porin LamB (TC 1.B.3) family. Homotrimer formed of three 18-stranded antiparallel beta-barrels, containing three independent channels.

The protein localises to the cell outer membrane. The catalysed reaction is beta-maltose(in) = beta-maltose(out). Functionally, involved in the transport of maltose and maltodextrins. This chain is Maltoporin, found in Hahella chejuensis (strain KCTC 2396).